The chain runs to 249 residues: Methyl-coenzyme M reductase subunit gamma (249 aa).

A disordered region spans residues 43 to 62 (RAPGEEYPSVHPPLEELDEP). Arg120 contacts coenzyme M.

It belongs to the methyl-coenzyme M reductase gamma subunit family. MCR is a hexamer of two alpha, two beta, and two gamma chains, forming a dimer of heterotrimers. Requires coenzyme F430 as cofactor.

The protein resides in the cytoplasm. The catalysed reaction is coenzyme B + methyl-coenzyme M = methane + coenzyme M-coenzyme B heterodisulfide. The protein operates within one-carbon metabolism; methyl-coenzyme M reduction; methane from methyl-coenzyme M: step 1/1. Component of the methyl-coenzyme M reductase (MCR) I that catalyzes the reductive cleavage of methyl-coenzyme M (CoM-S-CH3 or 2-(methylthio)ethanesulfonate) using coenzyme B (CoB or 7-mercaptoheptanoylthreonine phosphate) as reductant which results in the production of methane and the mixed heterodisulfide of CoB and CoM (CoM-S-S-CoB). This is the final step in methanogenesis. This Methanothermus fervidus protein is Methyl-coenzyme M reductase subunit gamma (mcrG).